Reading from the N-terminus, the 180-residue chain is Probable phospholipid hydroperoxide glutathione peroxidase (180 aa).

The active site involves Cys54.

Belongs to the glutathione peroxidase family.

The protein localises to the cytoplasm. The catalysed reaction is a hydroperoxy polyunsaturated fatty acid + 2 glutathione = a hydroxy polyunsaturated fatty acid + glutathione disulfide + H2O. In terms of biological role, protects cells and enzymes from oxidative damage, by catalyzing the reduction of hydrogen peroxide, lipid peroxides and organic hydroperoxide, by glutathione. The chain is Probable phospholipid hydroperoxide glutathione peroxidase (GPXHA-2) from Helianthus annuus (Common sunflower).